Reading from the N-terminus, the 312-residue chain is HTH-type transcriptional regulator PtxR (312 aa).

The HTH lysR-type domain maps to 11–68; it reads LNLNHLYAFVAVAEHNSFTAAAEALGLSKSLLSEQLRRLEADLGIQLLTRTTRRMTLT. The H-T-H motif DNA-binding region spans 28–47; the sequence is FTAAAEALGLSKSLLSEQLR.

It belongs to the LysR transcriptional regulatory family. In terms of assembly, monomer in solution. May dimerize on binding to DNA. Interacts with PtxS in the absence of 2-ketogluconate. Binding of the 2-ketogluconate effector to PtxS causes PtxS/PtxR complex dissociation.

Negatively regulated by PtxS, which interacts with PtxR and prevents its activity. Functionally, plays an important role in the regulation of the production of the virulence factor exotoxin A (toxA), via positive regulation of the transcription of the toxA gene. Acts by binding directly to the toxA promoter region. Besides toxA, PtxR modulates the expression of genes that code for the QS-controlled virulence factors. It negatively regulates the expression of the rhamnolipid and pyocyanine genes, through the autoinducer synthase RhlI, and the PQS synthesis operon pqsABCDE, while it positively regulates the expression of lasB through the autoinducer synthase LasI. Also positively regulates the expression of the exotoxin A regulatory protein (toxR or regA). In terms of biological role, in addition, is involved in the positive regulation of glucose metabolism via the regulation of the expression of the kgu and gad operons. Acts by binding directly to the promoter region of the kgu and gad operons. In Pseudomonas aeruginosa (strain ATCC 15692 / DSM 22644 / CIP 104116 / JCM 14847 / LMG 12228 / 1C / PRS 101 / PAO1), this protein is HTH-type transcriptional regulator PtxR.